The primary structure comprises 652 residues: DNA ligase (652 aa).

NAD(+)-binding positions include 29–33 (DSEYD), 78–79 (SL), and E107. K109 functions as the N6-AMP-lysine intermediate in the catalytic mechanism. 4 residues coordinate NAD(+): R130, E164, K278, and K302. Positions 395, 398, 413, and 418 each coordinate Zn(2+). The 76-residue stretch at 577 to 652 (VADAALSGLT…VRDEAWLESL (76 aa)) folds into the BRCT domain.

It belongs to the NAD-dependent DNA ligase family. LigA subfamily. Mg(2+) is required as a cofactor. It depends on Mn(2+) as a cofactor.

It catalyses the reaction NAD(+) + (deoxyribonucleotide)n-3'-hydroxyl + 5'-phospho-(deoxyribonucleotide)m = (deoxyribonucleotide)n+m + AMP + beta-nicotinamide D-nucleotide.. Functionally, DNA ligase that catalyzes the formation of phosphodiester linkages between 5'-phosphoryl and 3'-hydroxyl groups in double-stranded DNA using NAD as a coenzyme and as the energy source for the reaction. It is essential for DNA replication and repair of damaged DNA. This is DNA ligase from Streptococcus pneumoniae (strain Taiwan19F-14).